The sequence spans 226 residues: UPF0502 protein Gbem_0194 (226 aa).

The protein belongs to the UPF0502 family.

This chain is UPF0502 protein Gbem_0194, found in Citrifermentans bemidjiense (strain ATCC BAA-1014 / DSM 16622 / JCM 12645 / Bem) (Geobacter bemidjiensis).